Here is a 460-residue protein sequence, read N- to C-terminus: L-seryl-tRNA(Sec) selenium transferase (460 aa).

N6-(pyridoxal phosphate)lysine is present on Lys293.

Belongs to the SelA family. The cofactor is pyridoxal 5'-phosphate.

Its subcellular location is the cytoplasm. It catalyses the reaction L-seryl-tRNA(Sec) + selenophosphate + H(+) = L-selenocysteinyl-tRNA(Sec) + phosphate. It participates in aminoacyl-tRNA biosynthesis; selenocysteinyl-tRNA(Sec) biosynthesis; selenocysteinyl-tRNA(Sec) from L-seryl-tRNA(Sec) (bacterial route): step 1/1. Converts seryl-tRNA(Sec) to selenocysteinyl-tRNA(Sec) required for selenoprotein biosynthesis. In Pasteurella multocida (strain Pm70), this protein is L-seryl-tRNA(Sec) selenium transferase.